Reading from the N-terminus, the 116-residue chain is Non-specific lipid-transfer protein (116 aa).

An N-terminal signal peptide occupies residues 1 to 22; sequence MSLKLACVVVLCMVVGAPLAQG. 3 disulfides stabilise this stretch: C36–C52, C53–C98, and C73–C112.

The protein belongs to the plant LTP family.

Plant non-specific lipid-transfer proteins transfer phospholipids as well as galactolipids across membranes. May play a role in wax or cutin deposition in the cell walls of expanding epidermal cells and certain secretory tissues. This is Non-specific lipid-transfer protein from Gossypium hirsutum (Upland cotton).